A 616-amino-acid polypeptide reads, in one-letter code: MLLQIAEPGQSAVPHQHKLAVGIDLGTTNSLVASVRSGEAKTLPDMKGNVILPSVVQYQEDKICVGMNAYQSAAMDPQNTIISVKRLMGRSLKDIQARYPELPYQFSESENGLPVIQTAQGEVNPIQVSSEILKSLSRRAQDTLGGELEGVVITVPAYFDDAQRAGTKDAATLAGLNVLRLLNEPTAAAIAYGLDSGQEGVIAVYDLGGGTFDISILRLSKGVFEVLATGGDSALGGDDFDHVLAQWIKEQAGITSPLSSQEQRELLTLATQTKVALSDSDNVKISFKDWSGEISVELFNSLIQPLIKKTLMACRRALKDADITSEEVMEVVMVGGSTRTPFVRTSVGDYFGQTPLTSIDPDQVVAIGAAIQADILVGNKPDSEMLLLDVIPLSLGIETMGGLVEKIIPRNTTIPVAKAQEFTTFKDGQTGMMVHVVQGEREMVEDGRSLARFSLKGIPPMAAGAAHIRVTYQVDADGLLSVTAMEKSTGVQSHIQVKPSYGLSDNEVANMLKDSMTYAKEDMKARALAEQQVEADRVIEGLVVALNNDGDALLSKEEQAEILQAIEALITLRQGTDAQAIEDGIKKADEASQEFAARRMDASIRAALAGQSIDEV.

It belongs to the heat shock protein 70 family.

Functionally, chaperone involved in the maturation of iron-sulfur cluster-containing proteins. Has a low intrinsic ATPase activity which is markedly stimulated by HscB. The chain is Chaperone protein HscA homolog from Aliivibrio fischeri (strain ATCC 700601 / ES114) (Vibrio fischeri).